The sequence spans 1263 residues: Valine--tRNA ligase (1263 aa).

Ser-2 is subject to N-acetylserine. Residues 89-219 (GSRAAVLVQQ…YSGARSVTQQ (131 aa)) enclose the GST C-terminal domain. Positions 218-294 (QQPGSEVIAP…PGEKKDVSGA (77 aa)) are disordered. Composition is skewed to basic and acidic residues over residues 234-248 (LKKE…EKFQ) and 259-274 (HGEK…KRDP). The short motif at 343–353 (PNVTGSLHLGH) is the 'HIGH' region element. Phosphoserine occurs at positions 436 and 526. Lys-644 bears the N6-acetyllysine mark. A 'KMSKS' region motif is present at residues 861 to 865 (KMSKS). Lys-864 provides a ligand contact to ATP.

It belongs to the class-I aminoacyl-tRNA synthetase family. Forms high-molecular-mass aggregates with elongation factor 1.

It carries out the reaction tRNA(Val) + L-valine + ATP = L-valyl-tRNA(Val) + AMP + diphosphate. Its activity is regulated as follows. Can be regulated by protein kinase C-dependent phosphorylation. The chain is Valine--tRNA ligase (Vars1) from Mus musculus (Mouse).